Reading from the N-terminus, the 225-residue chain is Non-structural protein V (225 aa).

The segment covering 145-157 (SGPSLTDQASSKD) has biased composition (polar residues). The disordered stretch occupies residues 145-172 (SGPSLTDQASSKDPNFKRGGEIDGRHKG). A compositionally biased stretch (basic and acidic residues) spans 158–169 (PNFKRGGEIDGR). His174, Cys193, Cys197, Cys209, Cys211, Cys214, Cys218, and Cys221 together coordinate Zn(2+).

This sequence belongs to the paramyxoviruses V protein family.

It localises to the host cytoplasm. In terms of biological role, plays an essential role in the inhibition of host immune response. Prevents the establishment of cellular antiviral state by blocking interferon-alpha/beta (IFN-alpha/beta) production and signaling pathway. Interacts with host IFIH1/MDA5 and DHX58/LGP2 to inhibit the transduction pathway involved in the activation of IFN-beta promoter, thus protecting the virus against cell antiviral state. Efficiently blocks type I and type II IFN signaling following infection, probably by targeting host STAT1 for proteasomal degradation. This is Non-structural protein V (P/V) from Simian virus 41 (SV41).